The sequence spans 320 residues: Glucosaminate ammonia-lyase (320 aa).

36–43 (TGMQAGGQ) is a binding site for FAD. An intrachain disulfide couples Cys136 to Cys139. 285-294 (DVADHVYRQA) lines the FAD pocket.

The protein belongs to the class-II pyridine nucleotide-disulfide oxidoreductase family.

The catalysed reaction is 2-amino-2-deoxy-D-gluconate = 2-dehydro-3-deoxy-D-gluconate + NH4(+). Catalyzes the conversion of 2-amino-2-deoxy-D-gluconate (GlcNA) to 2-keto-3-deoxy-D-gluconic acid (KDGA) and ammonia. This Pseudomonas fluorescens protein is Glucosaminate ammonia-lyase.